A 723-amino-acid chain; its full sequence is Host cell factor 2 (723 aa).

Kelch repeat units follow at residues leucine 34–cysteine 79, arginine 83–histidine 130, lysine 207–asparagine 255, and methionine 257–glutamate 305. Fibronectin type-III domains follow at residues proline 357 to threonine 436, threonine 516 to proline 606, and phenylalanine 608 to alanine 720. The segment at alanine 398–asparagine 472 is disordered. The segment covering glutamine 419–alanine 433 has biased composition (polar residues).

In terms of assembly, binds KMT2A/MLL1. Component of the MLL1/MLL complex, at least composed of KMT2A/MLL1, ASH2L, RBBP5, DPY30, WDR5, MEN1, HCFC1 and HCFC2. Interacts with TASOR.

The protein resides in the cytoplasm. It is found in the nucleus. The chain is Host cell factor 2 (Hcfc2) from Rattus norvegicus (Rat).